A 528-amino-acid chain; its full sequence is MSAPKSGGDPLPHPPKEQLPDISYCITSPPPWPEAVLLGFQHYLVMLGTTVLIPSALVPQMGGRNEEKAKLIQTILFVAGLNTLLQTVFGTRLPAVIGASYTFVPVTISIMLSGRFNDVADPVERFKRIIRATQGALIVASTLQIILGFSGLWRNVVRFLSPLSAAPLVGLVGYGLYELGFPGVAKCIEIGLPGLIILILISQYMPHVIKGGKHVFARFAVIFSVAIVWLYAFFLTLGGAYNGVGTDTQRSCRTDRAGLISAAPWIRVPWPFQWGAPLFDAGEAFAMMMASFVALVESTGAFIAVSRYASATMPPPSVISRGVGWQGVAILISGLFGTGIGSSVSVENAGLLALTKIGSRRVVQISAGFMIFFSILGKFGAVFASIPSPIIAALYCLFFAYVGAGGLSLLQFCNLNSFRTLFILGFSIFLGLSIPQYFNEHTAIKGYGPVHTGARWFNDMVNVPFSSKAFVGGCVAYLLDTTLHKKDGSIRKDRGKHWWDRFWTFKNDPRTEEFYALPFNLNKYFPSV.

The interval 1 to 20 is disordered; that stretch reads MSAPKSGGDPLPHPPKEQLP. A run of 12 helical transmembrane segments spans residues 35–55, 71–91, 93–113, 133–153, 159–179, 181–201, 219–239, 285–305, 367–387, 390–410, 418–438, and 460–479; these read AVLL…LIPS, LIQT…VFGT, LPAV…IMLS, TQGA…SGLW, FLSP…LYEL, FPGV…LILI, FAVI…TLGG, FAMM…FIAV, AGFM…ASIP, IIAA…LSLL, FRTL…PQYF, and MVNV…AYLL.

This sequence belongs to the nucleobase:cation symporter-2 (NCS2) (TC 2.A.40) family. Weakly expressed in the vasculature of developing leaves.

The protein localises to the membrane. This Arabidopsis thaliana (Mouse-ear cress) protein is Nucleobase-ascorbate transporter 5 (NAT5).